We begin with the raw amino-acid sequence, 427 residues long: Trigger factor (427 aa).

Positions 163–248 (GDTVVIDFVG…IHEVKAKEVP (86 aa)) constitute a PPIase FKBP-type domain.

It belongs to the FKBP-type PPIase family. Tig subfamily.

Its subcellular location is the cytoplasm. It carries out the reaction [protein]-peptidylproline (omega=180) = [protein]-peptidylproline (omega=0). Its function is as follows. Involved in protein export. Acts as a chaperone by maintaining the newly synthesized protein in an open conformation. Functions as a peptidyl-prolyl cis-trans isomerase. This chain is Trigger factor, found in Streptococcus pneumoniae serotype 2 (strain D39 / NCTC 7466).